The sequence spans 118 residues: Small ribosomal subunit protein uS13 (118 aa).

Residues 94-118 (GLPVRGQRTKTNARTRKGPRKPIKK) are disordered.

Belongs to the universal ribosomal protein uS13 family. In terms of assembly, part of the 30S ribosomal subunit. Forms a loose heterodimer with protein S19. Forms two bridges to the 50S subunit in the 70S ribosome.

Functionally, located at the top of the head of the 30S subunit, it contacts several helices of the 16S rRNA. In the 70S ribosome it contacts the 23S rRNA (bridge B1a) and protein L5 of the 50S subunit (bridge B1b), connecting the 2 subunits; these bridges are implicated in subunit movement. Contacts the tRNAs in the A and P-sites. The chain is Small ribosomal subunit protein uS13 from Shigella dysenteriae serotype 1 (strain Sd197).